The primary structure comprises 1055 residues: Ephrin type-B receptor 2 (1055 aa).

Positions 1 to 18 (MALRRLGAALLLLPLLAA) are cleaved as a signal peptide. Topologically, residues 19 to 543 (VEETLMDSTT…QTSIQEKLPL (525 aa)) are extracellular. The 183-residue stretch at 20 to 202 (EETLMDSTTA…FYRKCPRIIQ (183 aa)) folds into the Eph LBD domain. Intrachain disulfides connect Cys-62–Cys-184 and Cys-97–Cys-107. N-linked (GlcNAc...) asparagine glycans are attached at residues Asn-265, Asn-336, Asn-428, and Asn-482. 2 Fibronectin type-III domains span residues 324–434 (IPSA…TNQA) and 435–530 (APSA…TMTE). The chain crosses the membrane as a helical span at residues 544–564 (IIGSSAAGLVFLIAVVVIAIV). The Cytoplasmic segment spans residues 565 to 1055 (CNRRGFERAD…KESNDCSCGG (491 aa)). One can recognise a Protein kinase domain in the interval 621–884 (VKIEQVIGAG…QIVNTLDKMI (264 aa)). ATP contacts are provided by residues 627-635 (IGAGEFGEV) and Lys-653. Catalysis depends on Asp-746, which acts as the Proton acceptor. Lys-891 is covalently cross-linked (Glycyl lysine isopeptide (Lys-Gly) (interchain with G-Cter in ubiquitin)). Residues 913 to 977 (TSFNTVDEWL…LNSIQVMRAQ (65 aa)) form the SAM domain. Ser-983 and Val-984 each carry phosphoserine. The short motif at 984-986 (VEG) is the PDZ-binding (in isoform 2) element. A disordered region spans residues 990–1055 (ARRPRATGRT…KESNDCSCGG (66 aa)). Residues 991–1002 (RRPRATGRTKRC) are compositionally biased toward basic residues. Residues 1025–1049 (KKTDPGRGREIQGIFFKEDSHKESN) show a composition bias toward basic and acidic residues.

It belongs to the protein kinase superfamily. Tyr protein kinase family. Ephrin receptor subfamily. Heterotetramer upon binding of the ligand. The heterotetramer is composed of an ephrin dimer and a receptor dimer. Interacts (via PDZ-binding motif) with GRIP1 and PICK1 (via PDZ domain). Interacts with ARHGEF15; mediates ARHGEF15 phosphorylation, ubiquitination and degradation by the proteasome. Interacts with AQP1; involved in endolymph production in the inner ear. Interacts with SPSB1 and SPSB4. The phosphorylated form interacts with RASA1 (via SH2 domain 1). Interacts with EFNA5. Interacts with SH2D3C. In terms of processing, autophosphorylated; ligand binding stimulates autophosphorylation on tyrosine residues. Polyubiquitinated; ligand binding stimulates ubiquitination. Ubiquitinated by RNF186 at Lys-891, mainly through 'Lys-27'-linked polyubiquitin chains. Ubiquitinated by CRL2(KLHDC2) E3 ligase complex. Post-translationally, ligand binding induces cleavage by matrix metalloproteinases (MMPs) such as MMP7/MMP9, producing an EphB2/N-terminal fragment (NTF) and a C-terminal long fragment (EphB2-LF). EphB2-LF is further cleaved by MMPs, producing EphB2/CTF1 which is further cleaved by the PS1/gamma-secretase producing EphB2/CTF2. Brain, heart, lung, kidney, placenta, pancreas, liver and skeletal muscle. Preferentially expressed in fetal brain.

It is found in the cell membrane. Its subcellular location is the cell projection. The protein localises to the axon. It localises to the dendrite. The enzyme catalyses L-tyrosyl-[protein] + ATP = O-phospho-L-tyrosyl-[protein] + ADP + H(+). Its function is as follows. Receptor tyrosine kinase which binds promiscuously transmembrane ephrin-B family ligands residing on adjacent cells, leading to contact-dependent bidirectional signaling into neighboring cells. The signaling pathway downstream of the receptor is referred to as forward signaling while the signaling pathway downstream of the ephrin ligand is referred to as reverse signaling. Functions in axon guidance during development. Involved in the guidance of commissural axons, that form a major interhemispheric connection between the 2 temporal lobes of the cerebral cortex. Also involved in guidance of contralateral inner ear efferent growth cones at the midline and of retinal ganglion cell axons to the optic disk. In addition to axon guidance, also regulates dendritic spines development and maturation and stimulates the formation of excitatory synapses. Upon activation by EFNB1, abolishes the ARHGEF15-mediated negative regulation on excitatory synapse formation. Controls other aspects of development including angiogenesis, palate development and in inner ear development through regulation of endolymph production. Forward and reverse signaling through the EFNB2/EPHB2 complex regulate movement and adhesion of cells that tubularize the urethra and septate the cloaca. May function as a tumor suppressor. May be involved in the regulation of platelet activation and blood coagulation. In Homo sapiens (Human), this protein is Ephrin type-B receptor 2 (EPHB2).